Reading from the N-terminus, the 132-residue chain is Glycine cleavage system H protein (132 aa).

Residues 24 to 106 (IATIGLSAFA…YGDGWLIKVR (83 aa)) form the Lipoyl-binding domain. Lysine 65 carries the N6-lipoyllysine modification.

Belongs to the GcvH family. The glycine cleavage system is composed of four proteins: P, T, L and H. (R)-lipoate is required as a cofactor.

In terms of biological role, the glycine cleavage system catalyzes the degradation of glycine. The H protein shuttles the methylamine group of glycine from the P protein to the T protein. This is Glycine cleavage system H protein from Rippkaea orientalis (strain PCC 8801 / RF-1) (Cyanothece sp. (strain PCC 8801)).